Here is a 528-residue protein sequence, read N- to C-terminus: Na(+)/H(+) antiporter NhaB (528 aa).

11 helical membrane passes run Val-23–Val-43, Gly-45–Leu-65, Leu-90–Met-110, Cys-136–Ile-156, Leu-204–Pro-224, Ile-242–Val-262, Gly-305–Ile-325, Glu-350–Ile-370, Leu-392–Gly-412, Ala-450–Ile-470, and Ile-479–Phe-499.

This sequence belongs to the NhaB Na(+)/H(+) (TC 2.A.34) antiporter family.

The protein localises to the cell inner membrane. The catalysed reaction is 2 Na(+)(in) + 3 H(+)(out) = 2 Na(+)(out) + 3 H(+)(in). In terms of biological role, na(+)/H(+) antiporter that extrudes sodium in exchange for external protons. The protein is Na(+)/H(+) antiporter NhaB of Vibrio campbellii (strain ATCC BAA-1116).